A 68-amino-acid polypeptide reads, in one-letter code: Small ribosomal subunit protein bS21 (68 aa).

Positions 35 to 68 are disordered; it reads HYEKPSEKRARERAAAVRRARKMERKRMERDGIK. The span at 37–49 shows a compositional bias: basic and acidic residues; it reads EKPSEKRARERAA. A compositionally biased stretch (basic residues) spans 50 to 59; the sequence is AVRRARKMER.

It belongs to the bacterial ribosomal protein bS21 family.

This Sphingopyxis alaskensis (strain DSM 13593 / LMG 18877 / RB2256) (Sphingomonas alaskensis) protein is Small ribosomal subunit protein bS21.